A 558-amino-acid polypeptide reads, in one-letter code: 2-isopropylmalate synthase (558 aa).

In terms of domain architecture, Pyruvate carboxyltransferase spans 30 to 303 (PIWCSVDLRD…DPELDCRDIE (274 aa)). Positions 39, 242, 244, and 278 each coordinate Mg(2+). A regulatory domain region spans residues 437-558 (QPNARIKFVD…ANRVLEERAK (122 aa)).

Belongs to the alpha-IPM synthase/homocitrate synthase family. LeuA type 2 subfamily. In terms of assembly, homodimer. Mg(2+) is required as a cofactor.

Its subcellular location is the cytoplasm. The catalysed reaction is 3-methyl-2-oxobutanoate + acetyl-CoA + H2O = (2S)-2-isopropylmalate + CoA + H(+). It participates in amino-acid biosynthesis; L-leucine biosynthesis; L-leucine from 3-methyl-2-oxobutanoate: step 1/4. Its function is as follows. Catalyzes the condensation of the acetyl group of acetyl-CoA with 3-methyl-2-oxobutanoate (2-ketoisovalerate) to form 3-carboxy-3-hydroxy-4-methylpentanoate (2-isopropylmalate). This is 2-isopropylmalate synthase from Agrobacterium fabrum (strain C58 / ATCC 33970) (Agrobacterium tumefaciens (strain C58)).